A 489-amino-acid chain; its full sequence is MPTLMVQGTTSDAGKTTVVAALCRWLARQGVSVAPFKPQNMALNSAVTVDGGEIGRSTALQALACGLEPHSDMNPVLLKPQSDCGAQVILRGKVHGNMDALDYHAYKAEAMNSVMASWRDLSARYDVVIAEGAGSPAEINLRANDIANMGFAEAADCPVLLVGDIDKGGVFAQLVGTLALISDSERGRTAGFVINRFRGDIALLEPGLDWLTEHTGKPVFGVLPYLHGLVIDSEDSVSAAGTSEAGALKVVVPVLPRISNHNDFDPLRLHPGVDLVFVGTDEPIPPADLIILPGSKSTRHDLQWLKQQGWPEAIQKHLRYGGKLLGICGGFQMLGLKVEDPEGLEGEVGTTKGLALFEMVTRMVPGKQLRMVNGGLTSHVASTAVTGALKGYEMHNGVTEGAALVRPFAELEGRPDGAVSADGQVAGTYIHGVFDEPAACKAILAWAGLKTQGEQSVDYQRHRLQQLDRLADQVDQCLDTDRLRSLLQL.

The GATase cobBQ-type domain occupies 247–439 (ALKVVVPVLP…IHGVFDEPAA (193 aa)). The Nucleophile role is filled by Cys328. His431 is an active-site residue.

Belongs to the CobB/CobQ family. CobQ subfamily.

The protein operates within cofactor biosynthesis; adenosylcobalamin biosynthesis. Catalyzes amidations at positions B, D, E, and G on adenosylcobyrinic A,C-diamide. NH(2) groups are provided by glutamine, and one molecule of ATP is hydrogenolyzed for each amidation. The polypeptide is Cobyric acid synthase (Marinobacter nauticus (strain ATCC 700491 / DSM 11845 / VT8) (Marinobacter aquaeolei)).